Reading from the N-terminus, the 368-residue chain is Glutamate 5-kinase (368 aa).

Residue Lys9 participates in ATP binding. Residues Ser49, Asp136, and Asn148 each contribute to the substrate site. ATP contacts are provided by residues 168–169 (TD) and 210–216 (TGGMMTK). The 79-residue stretch at 275-353 (AGIITIDNGA…ADIENVLGYE (79 aa)) folds into the PUA domain.

This sequence belongs to the glutamate 5-kinase family.

The protein resides in the cytoplasm. The enzyme catalyses L-glutamate + ATP = L-glutamyl 5-phosphate + ADP. It functions in the pathway amino-acid biosynthesis; L-proline biosynthesis; L-glutamate 5-semialdehyde from L-glutamate: step 1/2. In terms of biological role, catalyzes the transfer of a phosphate group to glutamate to form L-glutamate 5-phosphate. The polypeptide is Glutamate 5-kinase (Haemophilus influenzae (strain ATCC 51907 / DSM 11121 / KW20 / Rd)).